Reading from the N-terminus, the 356-residue chain is Protein pelota homolog (356 aa).

The protein belongs to the eukaryotic release factor 1 family. Pelota subfamily. As to quaternary structure, monomer. A divalent metal cation is required as a cofactor.

The protein localises to the cytoplasm. Its function is as follows. May function in recognizing stalled ribosomes, interact with stem-loop structures in stalled mRNA molecules, and effect endonucleolytic cleavage of the mRNA. May play a role in the release non-functional ribosomes and degradation of damaged mRNAs. Has endoribonuclease activity. In Pyrococcus horikoshii (strain ATCC 700860 / DSM 12428 / JCM 9974 / NBRC 100139 / OT-3), this protein is Protein pelota homolog.